We begin with the raw amino-acid sequence, 265 residues long: Osteoclast-associated immunoglobulin-like receptor (265 aa).

Residues 1-18 form the signal peptide; the sequence is MVLSLILQLSTLWPACRA. Topologically, residues 19-231 are extracellular; it reads DFTPTAPLAS…LDYTQGNLIR (213 aa). 2 Ig-like domains span residues 22-115 and 125-218; these read PTAP…SQPS and QLPR…SFEG. The N-linked (GlcNAc...) asparagine glycan is linked to asparagine 47. A disulfide bridge connects residues cysteine 52 and cysteine 99. N-linked (GlcNAc...) asparagine glycosylation occurs at asparagine 144. Residues 232–248 form a helical membrane-spanning segment; it reads LGLAGMVLICLGIIVTC. At 249-265 the chain is on the cytoplasmic side; it reads DWHSRSSAFDGLLPQQN.

The protein belongs to the leukocyte receptor complex/polymeric immunoglobulin receptor (PIR/LRC) family. As to expression, specifically expressed in preosteoclasts or mature osteoclasts.

The protein resides in the cell membrane. Regulator of osteoclastogenesis which plays an important bone-specific function in osteoclast differentiation. The chain is Osteoclast-associated immunoglobulin-like receptor (Oscar) from Mus musculus (Mouse).